A 121-amino-acid chain; its full sequence is Large ribosomal subunit protein bL12 (121 aa).

This sequence belongs to the bacterial ribosomal protein bL12 family. In terms of assembly, homodimer. Part of the ribosomal stalk of the 50S ribosomal subunit. Forms a multimeric L10(L12)X complex, where L10 forms an elongated spine to which 2 to 4 L12 dimers bind in a sequential fashion. Binds GTP-bound translation factors.

Forms part of the ribosomal stalk which helps the ribosome interact with GTP-bound translation factors. Is thus essential for accurate translation. The protein is Large ribosomal subunit protein bL12 of Pseudomonas syringae pv. tomato (strain ATCC BAA-871 / DC3000).